A 632-amino-acid chain; its full sequence is SH2B adapter protein 2 (632 aa).

Position 52 is a phosphotyrosine (Tyr-52). A Phosphoserine modification is found at Ser-141. A PH domain is found at 193 to 306 (DIQREGALRF…WVADIQGCVD (114 aa)). Ser-310 bears the Phosphoserine mark. The interval 381–409 (TLESPGGSGSDSNNTGEQGAETDPEAEPE) is disordered. Over residues 400-409 (AETDPEAEPE) the composition is skewed to acidic residues. Positions 417-515 (WFHGTLSRVK…SADITLRSYV (99 aa)) constitute an SH2 domain. Disordered stretches follow at residues 516-537 (RAQD…SPAC) and 558-632 (ASPS…YSFY). Residues 519–532 (DPPPEPGPTPPAAP) are compositionally biased toward pro residues. 2 stretches are compositionally biased toward low complexity: residues 558–579 (ASPS…AASG) and 604–626 (EAVA…RAVE). Tyr-629 is subject to Phosphotyrosine.

It belongs to the SH2B adapter family. As to quaternary structure, homodimer. Interacts with KIT/c-KIT, SHC1, EPOR, PDGFR, VAV1 and VAV3. Interacts (via N-terminal region) with SHC1. Interacts (via the phosphorylated C-terminus) with GRB2. Interacts (via its SH2 domain) with EPOR, INSR and KIT. Interacts with GRB2 after B-cell antigen receptor stimulation. Interacts (via PH domain) with VAV3. Interacts with NTRK1, NTRK2 and NTRK3 (phosphorylated); after stimulation of the receptor by its extracellular ligand and subsequent autophosphorylation of the receptor. Binds INSR, GRB2, ASB6 and CAP. Insulin stimulation leads to dissociation of CAP. Binds CBS only when SH2B2/APS has become phosphorylated. INSR binding does not depend on the phosphorylation of SH2B2/APS. In terms of processing, tyrosine phosphorylated by JAK2, KIT and other kinases activated by B-cell receptor in response to stimulation with cytokines, IL3, IL5, PDGF, IGF1, IGF2, CSF2/GM-CSF and cross-linking of the B-cell receptor complex. Expressed in spleen, prostate, testis, uterus, small intestine and skeletal muscle. Among hematopoietic cell lines, expressed exclusively in B-cells. Not expressed in most tumor cell lines.

It localises to the cytoplasm. The protein resides in the cell membrane. Its function is as follows. Adapter protein for several members of the tyrosine kinase receptor family. Involved in multiple signaling pathways. May be involved in coupling from immunoreceptor to Ras signaling. Acts as a negative regulator of cytokine signaling in collaboration with CBL. Binds to EPOR and suppresses EPO-induced STAT5 activation, possibly through a masking effect on STAT5 docking sites in EPOR. Suppresses PDGF-induced mitogenesis. May induce cytoskeletal reorganization via interaction with VAV3. The protein is SH2B adapter protein 2 (SH2B2) of Homo sapiens (Human).